A 335-amino-acid chain; its full sequence is Nucleoid-associated protein YejK (335 aa).

The protein belongs to the YejK family.

It is found in the cytoplasm. The protein localises to the nucleoid. This chain is Nucleoid-associated protein YejK, found in Shigella flexneri.